The chain runs to 113 residues: MYFAFKGLCGRRFLPIASFLTILNRILFQYWLFYNSLKEEKTFQKIFFSMNLKCRKKKEPNHIIYSQPPFLLGFMVQLQSCVKLLPLYLLFLLQGNGAHYASAMTSKVLSFFL.

Helical transmembrane passes span 13 to 35 and 70 to 92; these read FLPIASFLTILNRILFQYWLFYN and FLLGFMVQLQSCVKLLPLYLLFL.

It is found in the membrane. Identified in a screen for mutants with decreased levels of rDNA transcription. This Saccharomyces cerevisiae (strain ATCC 204508 / S288c) (Baker's yeast) protein is Regulator of rDNA transcription protein 7 (RRT7).